The following is a 242-amino-acid chain: 4-hydroxy-tetrahydrodipicolinate reductase (242 aa).

NAD(+) contacts are provided by residues 8–13 (GAKGRM), 75–77 (GTT), and 99–102 (ATNM). The active-site Proton donor/acceptor is H131. Residue H132 coordinates (S)-2,3,4,5-tetrahydrodipicolinate. The Proton donor role is filled by K135. Residue 141-142 (GT) coordinates (S)-2,3,4,5-tetrahydrodipicolinate.

Belongs to the DapB family.

The protein localises to the cytoplasm. It catalyses the reaction (S)-2,3,4,5-tetrahydrodipicolinate + NAD(+) + H2O = (2S,4S)-4-hydroxy-2,3,4,5-tetrahydrodipicolinate + NADH + H(+). The catalysed reaction is (S)-2,3,4,5-tetrahydrodipicolinate + NADP(+) + H2O = (2S,4S)-4-hydroxy-2,3,4,5-tetrahydrodipicolinate + NADPH + H(+). It functions in the pathway amino-acid biosynthesis; L-lysine biosynthesis via DAP pathway; (S)-tetrahydrodipicolinate from L-aspartate: step 4/4. Functionally, catalyzes the conversion of 4-hydroxy-tetrahydrodipicolinate (HTPA) to tetrahydrodipicolinate. The polypeptide is 4-hydroxy-tetrahydrodipicolinate reductase (Campylobacter jejuni subsp. jejuni serotype O:6 (strain 81116 / NCTC 11828)).